Consider the following 188-residue polypeptide: Protein CRIPTO3 (188 aa).

Residues 78-107 enclose the EGF-like domain; that stretch reads LNRTCCLNGGTCMLESFCACPPSFYGRNCE. A glycan (N-linked (GlcNAc...) asparagine) is linked at Asn79. 6 cysteine pairs are disulfide-bonded: Cys82-Cys89, Cys83-Cys95, Cys97-Cys106, Cys115-Cys133, Cys128-Cys149, and Cys131-Cys140.

Belongs to the EGF-CFC (Cripto-1/FRL1/Cryptic) family. Expressed weakly in lung, colon and breast. Expressed also strongly in primary cancer tissues; lung and colon cancers.

The protein localises to the cell membrane. Functionally, could play a role in the determination of the epiblastic cells that subsequently give rise to the mesoderm. Activates the Nodal-dependent signaling pathway. This chain is Protein CRIPTO3, found in Homo sapiens (Human).